The sequence spans 316 residues: Fe-S cluster assembly protein DRE2 (316 aa).

The interval 4-156 (SMPVATTVAA…KPQHVASTSV (153 aa)) is N-terminal SAM-like domain. A linker region spans residues 157-202 (PLKSRQPGALLNRKKTDPAKKQALWALSSPSTPKIDPEALLTAEDK). [2Fe-2S] cluster contacts are provided by C209, C223, C226, and C228. Residues 209–228 (CEPVRSSAPRRKKACKSCSC) are fe-S binding site A. [4Fe-4S] cluster is bound by residues C279, C282, C290, and C293. 2 consecutive short sequence motifs (cx2C motif) follow at residues 279–282 (CGSC) and 290–293 (CAGC). A fe-S binding site B region spans residues 279 to 293 (CGSCFLGDAFRCAGC).

Belongs to the anamorsin family. Monomer. Interacts with TAH18. Interacts with MIA40. [2Fe-2S] cluster serves as cofactor. [4Fe-4S] cluster is required as a cofactor.

It is found in the cytoplasm. The protein resides in the mitochondrion intermembrane space. In terms of biological role, component of the cytosolic iron-sulfur (Fe-S) protein assembly (CIA) machinery required for the maturation of extramitochondrial Fe-S proteins. Part of an electron transfer chain functioning in an early step of cytosolic Fe-S biogenesis, facilitating the de novo assembly of a [4Fe-4S] cluster on the scaffold complex CFD1-NBP35. Electrons are transferred to DRE2 from NADPH via the FAD- and FMN-containing protein TAH18. TAH18-DRE2 are also required for the assembly of the diferric tyrosyl radical cofactor of ribonucleotide reductase (RNR), probably by providing electrons for reduction during radical cofactor maturation in the catalytic small subunit RNR2. In Laccaria bicolor (strain S238N-H82 / ATCC MYA-4686) (Bicoloured deceiver), this protein is Fe-S cluster assembly protein DRE2.